A 169-amino-acid polypeptide reads, in one-letter code: Aspartic protease inhibitor 3 (169 aa).

The N-linked (GlcNAc...) asparagine glycan is linked to Asn1. 2 disulfide bridges follow: Cys30-Cys75 and Cys124-Cys134.

This sequence belongs to the protease inhibitor I3 (leguminous Kunitz-type inhibitor) family.

It is found in the vacuole. In terms of biological role, inhibitor of cathepsin D (aspartic protease). May also inhibit trypsin and chymotrypsin (serine proteases). Protects the plant by inhibiting proteases of invading organisms. The chain is Aspartic protease inhibitor 3 from Solanum tuberosum (Potato).